A 109-amino-acid chain; its full sequence is Cytochrome c oxidase subunit 6A1, mitochondrial (109 aa).

The transit peptide at 1 to 24 (MAAAAGSRVFGLLGRSRLQLSRCM) directs the protein to the mitochondrion. Residues 25–34 (SSGAHGEEGS) lie on the Mitochondrial matrix side of the membrane. The chain crosses the membrane as a helical span at residues 35-59 (ARMWKALTYFVALPGVGVSMLNVFL). The Mitochondrial intermembrane portion of the chain corresponds to 60 to 109 (KSHHGEEERPEFVAYPHLRIRSKPFPWGDGNHTLFHNPHVNPLPTGYEDE).

Belongs to the cytochrome c oxidase subunit 6A family. As to quaternary structure, component of the cytochrome c oxidase (complex IV, CIV), a multisubunit enzyme composed of 14 subunits. The complex is composed of a catalytic core of 3 subunits MT-CO1, MT-CO2 and MT-CO3, encoded in the mitochondrial DNA, and 11 supernumerary subunits COX4I1 (or COX4I2), COX5A, COX5B, COX6A2 (or COX6A1), COX6B1 (or COX6B2), COX6C, COX7A1 (or COX7A2), COX7B, COX7C, COX8B and NDUFA4, which are encoded in the nuclear genome. The complex exists as a monomer or a dimer and forms supercomplexes (SCs) in the inner mitochondrial membrane with NADH-ubiquinone oxidoreductase (complex I, CI) and ubiquinol-cytochrome c oxidoreductase (cytochrome b-c1 complex, complex III, CIII), resulting in different assemblies (supercomplex SCI(1)III(2)IV(1) and megacomplex MCI(2)III(2)IV(2)).

It localises to the mitochondrion inner membrane. The protein operates within energy metabolism; oxidative phosphorylation. Its function is as follows. Component of the cytochrome c oxidase, the last enzyme in the mitochondrial electron transport chain which drives oxidative phosphorylation. The respiratory chain contains 3 multisubunit complexes succinate dehydrogenase (complex II, CII), ubiquinol-cytochrome c oxidoreductase (cytochrome b-c1 complex, complex III, CIII) and cytochrome c oxidase (complex IV, CIV), that cooperate to transfer electrons derived from NADH and succinate to molecular oxygen, creating an electrochemical gradient over the inner membrane that drives transmembrane transport and the ATP synthase. Cytochrome c oxidase is the component of the respiratory chain that catalyzes the reduction of oxygen to water. Electrons originating from reduced cytochrome c in the intermembrane space (IMS) are transferred via the dinuclear copper A center (CU(A)) of subunit 2 and heme A of subunit 1 to the active site in subunit 1, a binuclear center (BNC) formed by heme A3 and copper B (CU(B)). The BNC reduces molecular oxygen to 2 water molecules unsing 4 electrons from cytochrome c in the IMS and 4 protons from the mitochondrial matrix. This Bos taurus (Bovine) protein is Cytochrome c oxidase subunit 6A1, mitochondrial (COX6A1).